A 617-amino-acid chain; its full sequence is Leucine aminopeptidase 2 (617 aa).

A peptide contacts are provided by residues 139-141 (QCQ) and 271-276 (PYGGME). Position 300 (H300) interacts with Zn(2+). The active-site Proton acceptor is the E301. Residues H304 and E323 each coordinate Zn(2+). The active-site Proton donor is Y388.

It belongs to the peptidase M1 family. Zn(2+) is required as a cofactor.

Its subcellular location is the cytoplasm. It is found in the nucleus. The enzyme catalyses an epoxide + H2O = an ethanediol. In terms of biological role, aminopeptidase that preferentially cleaves di- and tripeptides. Also has low epoxide hydrolase activity (in vitro). Can hydrolyze the epoxide leukotriene LTA(4) but it forms preferentially 5,6-dihydroxy-7,9,11,14-eicosatetraenoic acid rather than the cytokine leukotriene B(4) as the product compared to the homologous mammalian enzyme (in vitro). This is Leucine aminopeptidase 2 from Neosartorya fischeri (strain ATCC 1020 / DSM 3700 / CBS 544.65 / FGSC A1164 / JCM 1740 / NRRL 181 / WB 181) (Aspergillus fischerianus).